The chain runs to 438 residues: tRNA modification GTPase MnmE (438 aa).

Positions 21, 79, and 118 each coordinate (6S)-5-formyl-5,6,7,8-tetrahydrofolate. One can recognise a TrmE-type G domain in the interval 215-362 (GFSIVLIGAP…LEARIEQIVR (148 aa)). Residue asparagine 225 coordinates K(+). GTP-binding positions include 225–230 (NAGKSS), 244–250 (TDIPGTT), and 269–272 (DTAG). Serine 229 serves as a coordination point for Mg(2+). K(+)-binding residues include threonine 244, isoleucine 246, and threonine 249. Threonine 250 contributes to the Mg(2+) binding site. Residue lysine 438 participates in (6S)-5-formyl-5,6,7,8-tetrahydrofolate binding.

This sequence belongs to the TRAFAC class TrmE-Era-EngA-EngB-Septin-like GTPase superfamily. TrmE GTPase family. In terms of assembly, homodimer. Heterotetramer of two MnmE and two MnmG subunits. K(+) serves as cofactor.

The protein localises to the cytoplasm. In terms of biological role, exhibits a very high intrinsic GTPase hydrolysis rate. Involved in the addition of a carboxymethylaminomethyl (cmnm) group at the wobble position (U34) of certain tRNAs, forming tRNA-cmnm(5)s(2)U34. The polypeptide is tRNA modification GTPase MnmE (Maricaulis maris (strain MCS10) (Caulobacter maris)).